The chain runs to 471 residues: SVGFKAGVKEYKLTYYTPEYETKDTDILAAFRVTPQPGVPPEEAGAAVRAESSTGTWTTVWTDGLTSLDRYKGRCYHIEPVLGEEDQYIAYVAYPLDLFEEGSVTNMFTSIVGNVFGFKALRALRLEDLRVPTAYIKTFQGPPHGIQVERDKLNKYGRPLLGCTIKPKLGLSAKNYGRAVYECLRGGLDFTKDDENVNSQPFMRWRDRFLFCAEALFKAQAETGEIKGHYLNATAGTCEEMMKRAVFARELGAPIVMHDYLTGGFTANTSLAHYCRDNGLLLHIHRAMHAVIDRQKNHGMHFRVLAKALRLSGGDHVHAGTVVGKLEGERDITLGFVDLLRDDFVEKDRSRGIYFTQDWVSLPGVLAVRSGGIHVWHMPALTEIFGDDSVLQFGGGTLGHPWGNAPGAVANRVALEACVKARNEGRDLAAEGNEIIREASKWSPELAAACEVWKAIRFNFKAVDTLDPERE.

Residue lysine 5 is modified to N6,N6,N6-trimethyllysine. Substrate contacts are provided by asparagine 114 and threonine 164. The Proton acceptor role is filled by lysine 166. Residue lysine 168 coordinates substrate. Mg(2+) contacts are provided by lysine 192, aspartate 194, and glutamate 195. At lysine 192 the chain carries N6-carboxylysine. Catalysis depends on histidine 285, which acts as the Proton acceptor. Substrate-binding residues include arginine 286, histidine 318, and serine 370.

This sequence belongs to the RuBisCO large chain family. Type I subfamily. As to quaternary structure, heterohexadecamer of 8 large chains and 8 small chains; disulfide-linked. The disulfide link is formed within the large subunit homodimers. The cofactor is Mg(2+). Post-translationally, the disulfide bond which can form in the large chain dimeric partners within the hexadecamer appears to be associated with oxidative stress and protein turnover.

The protein localises to the plastid. Its subcellular location is the chloroplast. The enzyme catalyses 2 (2R)-3-phosphoglycerate + 2 H(+) = D-ribulose 1,5-bisphosphate + CO2 + H2O. It carries out the reaction D-ribulose 1,5-bisphosphate + O2 = 2-phosphoglycolate + (2R)-3-phosphoglycerate + 2 H(+). RuBisCO catalyzes two reactions: the carboxylation of D-ribulose 1,5-bisphosphate, the primary event in carbon dioxide fixation, as well as the oxidative fragmentation of the pentose substrate in the photorespiration process. Both reactions occur simultaneously and in competition at the same active site. The polypeptide is Ribulose bisphosphate carboxylase large chain (Deppea grandiflora).